Reading from the N-terminus, the 266-residue chain is Glutamate racemase (266 aa).

Residues 9 to 10 (DS) and 41 to 42 (YG) contribute to the substrate site. Cys-72 functions as the Proton donor/acceptor in the catalytic mechanism. 73–74 (NT) is a substrate binding site. Residue Cys-184 is the Proton donor/acceptor of the active site. 185–186 (TH) contacts substrate.

Belongs to the aspartate/glutamate racemases family. As to quaternary structure, homodimer.

The catalysed reaction is L-glutamate = D-glutamate. It functions in the pathway cell wall biogenesis; peptidoglycan biosynthesis. Its function is as follows. Provides the (R)-glutamate required for cell wall biosynthesis. This is Glutamate racemase from Staphylococcus aureus (strain MRSA252).